The sequence spans 122 residues: Small ribosomal subunit protein uS13 (122 aa).

Residues 95-122 (QLPVRGQRTHTNARTRKGKAKPIAGKKK) are disordered.

Belongs to the universal ribosomal protein uS13 family. As to quaternary structure, part of the 30S ribosomal subunit. Forms a loose heterodimer with protein S19. Forms two bridges to the 50S subunit in the 70S ribosome.

Its function is as follows. Located at the top of the head of the 30S subunit, it contacts several helices of the 16S rRNA. In the 70S ribosome it contacts the 23S rRNA (bridge B1a) and protein L5 of the 50S subunit (bridge B1b), connecting the 2 subunits; these bridges are implicated in subunit movement. Contacts the tRNAs in the A and P-sites. The chain is Small ribosomal subunit protein uS13 from Beijerinckia indica subsp. indica (strain ATCC 9039 / DSM 1715 / NCIMB 8712).